Reading from the N-terminus, the 262-residue chain is Aquaporin TIP3-1 (262 aa).

2 consecutive transmembrane segments (helical) span residues 27–47 (AAIS…GSVL) and 61–81 (GLVA…AVAV). Positions 89–91 (NPA) match the NPA 1 motif. 3 helical membrane-spanning segments follow: residues 104–124 (LVRA…ATLL), 148–168 (AVLL…ATVI), and 175–195 (VGTI…LAGG). An NPA 2 motif is present at residues 203–205 (NPA). A helical transmembrane segment spans residues 223–243 (YWLGPFLGAGLAGLVYEYLVI).

The protein belongs to the MIP/aquaporin (TC 1.A.8) family. TIP (TC 1.A.8.10) subfamily.

The protein localises to the vacuole membrane. In terms of biological role, aquaporins facilitate the transport of water and small neutral solutes across cell membranes. In Zea mays (Maize), this protein is Aquaporin TIP3-1 (TIP3-1).